The chain runs to 508 residues: Photosystem II CP47 reaction center protein (508 aa).

6 consecutive transmembrane segments (helical) span residues 21-36 (SVHIMHTALVAGWAGS), 101-115 (IVFSGLCFLAAIWHW), 140-156 (GIHLFLSGLACFGFGAF), 203-218 (IAAGTLGILAGLFHLS), 237-252 (VLSSSIAAVFFAAFVV), and 457-472 (SFALLFFFGHIWHGAR).

This sequence belongs to the PsbB/PsbC family. PsbB subfamily. In terms of assembly, PSII is composed of 1 copy each of membrane proteins PsbA, PsbB, PsbC, PsbD, PsbE, PsbF, PsbH, PsbI, PsbJ, PsbK, PsbL, PsbM, PsbT, PsbX, PsbY, PsbZ, Psb30/Ycf12, at least 3 peripheral proteins of the oxygen-evolving complex and a large number of cofactors. It forms dimeric complexes. Binds multiple chlorophylls. PSII binds additional chlorophylls, carotenoids and specific lipids. is required as a cofactor.

The protein localises to the plastid. Its subcellular location is the chloroplast thylakoid membrane. Its function is as follows. One of the components of the core complex of photosystem II (PSII). It binds chlorophyll and helps catalyze the primary light-induced photochemical processes of PSII. PSII is a light-driven water:plastoquinone oxidoreductase, using light energy to abstract electrons from H(2)O, generating O(2) and a proton gradient subsequently used for ATP formation. In Ipomoea purpurea (Common morning glory), this protein is Photosystem II CP47 reaction center protein.